The following is a 211-amino-acid chain: Large ribosomal subunit protein uL3 (211 aa).

The residue at position 151 (Gln-151) is an N5-methylglutamine.

This sequence belongs to the universal ribosomal protein uL3 family. In terms of assembly, part of the 50S ribosomal subunit. Forms a cluster with proteins L14 and L19. In terms of processing, methylated by PrmB.

Its function is as follows. One of the primary rRNA binding proteins, it binds directly near the 3'-end of the 23S rRNA, where it nucleates assembly of the 50S subunit. This Francisella tularensis subsp. tularensis (strain FSC 198) protein is Large ribosomal subunit protein uL3.